Here is a 325-residue protein sequence, read N- to C-terminus: Beta-ketoacyl-[acyl-carrier-protein] synthase III (325 aa).

Residues Cys-112 and His-250 contribute to the active site. Residues 251–255 (QANSR) are ACP-binding. Asn-280 is a catalytic residue.

It belongs to the thiolase-like superfamily. FabH family. As to quaternary structure, homodimer.

It localises to the cytoplasm. The enzyme catalyses malonyl-[ACP] + acetyl-CoA + H(+) = 3-oxobutanoyl-[ACP] + CO2 + CoA. It participates in lipid metabolism; fatty acid biosynthesis. In terms of biological role, catalyzes the condensation reaction of fatty acid synthesis by the addition to an acyl acceptor of two carbons from malonyl-ACP. Catalyzes the first condensation reaction which initiates fatty acid synthesis and may therefore play a role in governing the total rate of fatty acid production. Possesses both acetoacetyl-ACP synthase and acetyl transacylase activities. Its substrate specificity determines the biosynthesis of branched-chain and/or straight-chain of fatty acids. The protein is Beta-ketoacyl-[acyl-carrier-protein] synthase III of Lactococcus lactis subsp. cremoris (strain SK11).